Consider the following 308-residue polypeptide: Energy-coupling factor transporter ATP-binding protein EcfA2 (308 aa).

Positions 3-263 (IEVKNISKVF…VDFLRENEME (261 aa)) constitute an ABC transporter domain. 40–47 (GPTGSGKT) provides a ligand contact to ATP.

It belongs to the ABC transporter superfamily. Energy-coupling factor EcfA family. Forms a stable energy-coupling factor (ECF) transporter complex composed of 2 membrane-embedded substrate-binding proteins (S component), 2 ATP-binding proteins (A component) and 2 transmembrane proteins (T component).

It localises to the cell membrane. In terms of biological role, ATP-binding (A) component of a common energy-coupling factor (ECF) ABC-transporter complex. Unlike classic ABC transporters this ECF transporter provides the energy necessary to transport a number of different substrates. The polypeptide is Energy-coupling factor transporter ATP-binding protein EcfA2 (Mycoplasma mobile (strain ATCC 43663 / 163K / NCTC 11711) (Mesomycoplasma mobile)).